The sequence spans 383 residues: Trihelix transcription factor ASIL1 (383 aa).

Disordered regions lie at residues 1–32 (MEDD…LPTN), 61–94 (HTPS…DDCW), 189–295 (IASS…SGVG), and 346–383 (EITQ…NVSS). A compositionally biased stretch (gly residues) spans 66 to 88 (TGGGGSGNRNGRGGGGGSGGGGG). The Myb-like domain occupies 94 to 153 (WSEEATKVLIEAWGDRFSEPGKGTLKQQHWKEVAEIVNKSRQCKYPKTDIQCKNRIDTVK). Polar residues predominate over residues 206-225 (NSRSSMFKRQTKGNQIVQQQ). Over residues 226-235 (QEKRGSDSMR) the composition is skewed to basic and acidic residues. Residues 228–241 (KRGSDSMRWHFRKR) carry the Bipartite nuclear localization signal motif. The span at 246–262 (TESESDPEPEASPEESA) shows a compositional bias: acidic residues. A compositionally biased stretch (low complexity) spans 263–274 (ESLPPLQPIQPL). Residues 304 to 365 (FTEAYEKAET…ERSRQRGERR (62 aa)) adopt a coiled-coil conformation. The segment covering 356 to 367 (ERSRQRGERRIV) has biased composition (basic and acidic residues).

Its subcellular location is the nucleus. In terms of biological role, transcription repressor that binds specific DNA sequence such as the GT-box-like motif 5'-CGTGATT-3' in the AT2S3 promoter. Negative regulator of seed maturation genes during seed germination and seedling development. May target GT-box-containing embryonic genes by competing with the binding of transcriptional activators to this promoter region. Contributes to the maintenance and control of seed filling and may repress the maturation program during early embryogenesis. This chain is Trihelix transcription factor ASIL1, found in Arabidopsis thaliana (Mouse-ear cress).